Reading from the N-terminus, the 645-residue chain is Beta-galactosidase (645 aa).

A substrate-binding site is contributed by Arg102. Cys106 contributes to the Zn(2+) binding site. Asn140 provides a ligand contact to substrate. Glu141 acts as the Proton donor in catalysis. The Zn(2+) site is built by Cys150, Cys152, and Cys155. Catalysis depends on Glu312, which acts as the Nucleophile. Substrate-binding positions include Trp320 and 360–363 (EQMH).

It belongs to the glycosyl hydrolase 42 family. As to quaternary structure, homotrimer.

The catalysed reaction is Hydrolysis of terminal non-reducing beta-D-galactose residues in beta-D-galactosides.. With respect to regulation, inhibited by Cu(2+) and Fe(2+), and moderately activated by divalent cations such as Co(2+), Mn(2+) and Zn(2+). Considerably activated by dithiothreitol, beta-mercaptoethanol and cysteine. The protein is Beta-galactosidase of Thermus thermophilus.